We begin with the raw amino-acid sequence, 383 residues long: Protein delta homolog 2 (383 aa).

The first 26 residues, 1–26, serve as a signal peptide directing secretion; that stretch reads MPSGCRCLHLVCLLCILAAPVKPVRA. EGF-like domains lie at 27–58, 62–89, 91–129, and 131–172; these read DDCS…LHCE, RMPG…KFCD, DEHV…RDCE, and KEGP…AHCE. At 27–306 the chain is on the extracellular side; sequence DDCSSHCDLA…RQEAGLGKSS (280 aa). 17 disulfides stabilise this stretch: Cys29–Cys40, Cys33–Cys46, Cys48–Cys57, Cys66–Cys71, Cys79–Cys88, Cys95–Cys107, Cys101–Cys117, Cys119–Cys128, Cys135–Cys148, Cys142–Cys160, Cys162–Cys171, Cys178–Cys189, Cys183–Cys198, Cys200–Cys209, Cys216–Cys227, Cys221–Cys236, and Cys238–Cys247. Asn157 carries an N-linked (GlcNAc...) asparagine glycan. In terms of domain architecture, EGF-like 5; calcium-binding spans 174–210; it reads NVDDCLMRPCANGATCLDGINRFSCLCPEGFAGRFCT. One can recognise an EGF-like 6; calcium-binding domain in the interval 212–248; it reads NLDDCASRPCQRGARCRDRVHDFDCLCPSGYGGKTCE. A helical transmembrane segment spans residues 307–327; it reads LVAVVVFGAVTATLVLSTVLL. Residues 328–383 are Cytoplasmic-facing; the sequence is TLRAWRRGVCPPGPCCYPAPHYAPARQDQECQVSMLPAGLPLPPDLPPEPGKTTAL.

The protein localises to the membrane. Functionally, regulates adipogenesis. This chain is Protein delta homolog 2 (DLK2), found in Sus scrofa (Pig).